Here is a 497-residue protein sequence, read N- to C-terminus: Peptidoglycan endopeptidase RipA (497 aa).

Residues 1–39 form the signal peptide; it reads MRRTVRALATRVHGRVCAVPLVVGMLLATALYGGGPAAA. The segment covering 177 to 192 has biased composition (basic and acidic residues); sequence ARLAKEKADQAARDAE. Disordered stretches follow at residues 177–198 and 253–297; these read ARLA…QDNA and APAA…GQNW. Pro residues predominate over residues 255–273; the sequence is AAAPAPVPNSAPAPVPGAQ. One can recognise a NlpC/P60 domain in the interval 365–497; that stretch reads REAVEYVIRR…TPYVTRLIEY (133 aa). Cys408 acts as the Nucleophile in catalysis. His457 acts as the Proton acceptor in catalysis. The active site involves Glu469.

The protein belongs to the peptidase C40 family. As to quaternary structure, monomer.

The protein resides in the secreted. In terms of biological role, peptidoglycan endopeptidase that cleaves the bond between D-glutamate and meso-diaminopimelate. Binds and degrades high-molecular weight peptidoglycan. Required for normal separation of daughter cells after cell division and for cell wall integrity. This Mycolicibacterium smegmatis (strain ATCC 700084 / mc(2)155) (Mycobacterium smegmatis) protein is Peptidoglycan endopeptidase RipA (ripA).